The primary structure comprises 148 residues: MFQGETAITLDDKGRMVVPVVYRDLIARMSANRLVLTYNPFEAGCLWLYVEKEWERVRDELMVKPNAHRVVRVLQQKLVGSSALLELDANGRISVPSSHRSAVAIEKKAVLLGMGDKFELWSEQAHHALIQQTLSDGDLGDGLLDLRL.

2 SpoVT-AbrB domains span residues 5–53 and 82–125; these read ETAI…VEKE and SALL…SEQA.

This sequence belongs to the MraZ family. As to quaternary structure, forms oligomers.

Its subcellular location is the cytoplasm. The protein resides in the nucleoid. This Xylella fastidiosa (strain Temecula1 / ATCC 700964) protein is Transcriptional regulator MraZ.